The chain runs to 318 residues: Acetylglutamate kinase (318 aa).

Substrate-binding positions include 80–81, Arg-102, and Asn-203; that span reads GG.

The protein belongs to the acetylglutamate kinase family. ArgB subfamily.

The protein localises to the cytoplasm. It carries out the reaction N-acetyl-L-glutamate + ATP = N-acetyl-L-glutamyl 5-phosphate + ADP. Its pathway is amino-acid biosynthesis; L-arginine biosynthesis; N(2)-acetyl-L-ornithine from L-glutamate: step 2/4. Its function is as follows. Catalyzes the ATP-dependent phosphorylation of N-acetyl-L-glutamate. The sequence is that of Acetylglutamate kinase from Bifidobacterium adolescentis (strain ATCC 15703 / DSM 20083 / NCTC 11814 / E194a).